The following is a 394-amino-acid chain: Phenylalanine 4-monooxygenase, chloroplastic (394 aa).

Residues 1 to 79 constitute a chloroplast transit peptide; sequence MAMEVGYLRH…LNQIQAVSTA (79 aa). The disordered stretch occupies residues 75 to 97; sequence AVSTAEKEREADKTSTPPIPSSI. Residues H252, H257, and E297 each contribute to the Fe cation site.

This sequence belongs to the biopterin-dependent aromatic amino acid hydroxylase family. In terms of assembly, forms monomers. Requires Fe(2+) as cofactor.

The protein resides in the plastid. It is found in the chloroplast. It carries out the reaction (6R)-L-erythro-5,6,7,8-tetrahydrobiopterin + L-phenylalanine + O2 = (4aS,6R)-4a-hydroxy-L-erythro-5,6,7,8-tetrahydrobiopterin + L-tyrosine. Functionally, catalyzes the hydroxylation of L-phenylalanine to L-tyrosine. Does not seem to be tetrahydropterin-dependent and shows preference for 10-formyltetrahydrofolate as cosubstrate and electron donor. The chain is Phenylalanine 4-monooxygenase, chloroplastic from Physcomitrium patens (Spreading-leaved earth moss).